Here is a 375-residue protein sequence, read N- to C-terminus: Growth/differentiation factor 8 (375 aa).

The first 23 residues, 1–23 (MQKLQIYVYIYLFMLIVAGPVDL), serve as a signal peptide directing secretion. Residues 24-266 (NENSEQKENV…VTDTPKRSRR (243 aa)) constitute a propeptide that is removed on maturation. A glycan (N-linked (GlcNAc...) asparagine) is linked at N71. Disulfide bonds link C272-C282, C281-C340, C309-C372, and C313-C374.

It belongs to the TGF-beta family. Homodimer; disulfide-linked. Interacts with WFIKKN2, leading to inhibit its activity. Interacts with FSTL3. Post-translationally, synthesized as large precursor molecule that undergoes proteolytic cleavage to generate an N-terminal propeptide and a disulfide linked C-terminal dimer, which is the biologically active molecule. The circulating form consists of a latent complex of the C-terminal dimer and other proteins, including its propeptide, which maintain the C-terminal dimer in a latent, inactive state. Ligand activation requires additional cleavage of the prodomain by a tolloid-like metalloproteinase.

The protein localises to the secreted. Functionally, acts specifically as a negative regulator of skeletal muscle growth. This chain is Growth/differentiation factor 8 (MSTN), found in Sus scrofa (Pig).